The chain runs to 258 residues: Imidazole glycerol phosphate synthase subunit HisF (258 aa).

Residues aspartate 11 and aspartate 130 contribute to the active site.

Belongs to the HisA/HisF family. As to quaternary structure, heterodimer of HisH and HisF.

The protein resides in the cytoplasm. The enzyme catalyses 5-[(5-phospho-1-deoxy-D-ribulos-1-ylimino)methylamino]-1-(5-phospho-beta-D-ribosyl)imidazole-4-carboxamide + L-glutamine = D-erythro-1-(imidazol-4-yl)glycerol 3-phosphate + 5-amino-1-(5-phospho-beta-D-ribosyl)imidazole-4-carboxamide + L-glutamate + H(+). Its pathway is amino-acid biosynthesis; L-histidine biosynthesis; L-histidine from 5-phospho-alpha-D-ribose 1-diphosphate: step 5/9. IGPS catalyzes the conversion of PRFAR and glutamine to IGP, AICAR and glutamate. The HisF subunit catalyzes the cyclization activity that produces IGP and AICAR from PRFAR using the ammonia provided by the HisH subunit. This is Imidazole glycerol phosphate synthase subunit HisF from Sodalis glossinidius (strain morsitans).